The primary structure comprises 559 residues: Cytokine-like nuclear factor N-PAC (559 aa).

Residues 9–70 (VNDLVWAKMK…ETQIKPYQEF (62 aa)) form the PWWP domain. The tract at residues 106–137 (SEQDNRPDPDVEFNKLREGGTESGEETTVNNT) is disordered. Residues 108 to 125 (QDNRPDPDVEFNKLREGG) show a composition bias toward basic and acidic residues. The interval 267 to 559 (RNIQASNLKF…SSAVYVRARF (293 aa)) is dehydrogenase domain. Residues 277 to 291 (GFLGLGIMGCGMVKN) and Lys511 each bind NAD(+).

It belongs to the HIBADH-related family. NP60 subfamily. Binds to mononucleosomes.

The protein resides in the chromosome. In terms of biological role, nucleosome-destabilizing factor that is recruited to genes during transcriptional activation and colocalizes with a subset of trimethylated 'Lys-36' histone H3 (H3K36me3)-enriched regions. This chain is Cytokine-like nuclear factor N-PAC, found in Aedes aegypti (Yellowfever mosquito).